We begin with the raw amino-acid sequence, 213 residues long: Probable glutathione S-transferase DHAR1, cytosolic (213 aa).

Residues Lys-8 and Asp-19 each coordinate glutathione. L-ascorbate is bound by residues Lys-8 and Asp-19. The GST N-terminal domain maps to 10–89 (AVGHPDTLGD…VIEEKYPTPS (80 aa)). Residue Cys-20 is the Nucleophile of the active site. Residues Lys-47, Val-60, Ser-74, His-160, and Trp-207 each contribute to the glutathione site. A GST C-terminal domain is found at 73–213 (DSDVITQVIE…IAGWAPKVNA (141 aa)). L-ascorbate is bound at residue Lys-210.

This sequence belongs to the GST superfamily. DHAR family. Monomer.

The protein localises to the cytoplasm. It is found in the cytosol. It catalyses the reaction RX + glutathione = an S-substituted glutathione + a halide anion + H(+). The enzyme catalyses L-dehydroascorbate + 2 glutathione = glutathione disulfide + L-ascorbate. In terms of biological role, involved in ascorbate homeostasis. Maintains redox pools of ascorbate by recycling dihydroascorbate (DHA) to ascorbate. Involved in scavenging reactive oxygen species (ROS) under oxidative stresses. Possesses dehydroascorbate reductase (DHAR) activity in vitro. May function via a ping-pong reaction mechanism with an electron transfer at the active site. Possesses chaperone-like activity in vitro. This chain is Probable glutathione S-transferase DHAR1, cytosolic, found in Oryza sativa subsp. japonica (Rice).